The following is a 295-amino-acid chain: Transcriptional regulator SirC (295 aa).

The HTH araC/xylS-type domain occupies 195–292 (EKVYNIIISD…KITPLSFMRT (98 aa)). 2 consecutive DNA-binding regions (H-T-H motif) follow at residues 212–233 (AEVAGKLFMSVSSLKRKLAAEE) and 259–282 (ISQVATMCGYDTPSYFIAIFKRHF).

Its function is as follows. Positive regulator of the expression of the invasion-associated type III secretion system encoded within SPI-1 (pathogenicity island 1). This is Transcriptional regulator SirC (sirC) from Salmonella typhi.